The following is a 776-amino-acid chain: Mitochondrial intermediate peptidase (776 aa).

A mitochondrion-targeting transit peptide spans 1 to 28 (MFVRFYKRLDRQYIQSQRRWILSSNKCL). The disordered stretch occupies residues 48-71 (DHWEESQAQNTSSEQDNKGKNSSY). Over residues 53–71 (SQAQNTSSEQDNKGKNSSY) the composition is skewed to polar residues. Position 567 (H567) interacts with Zn(2+). The active site involves E568. Zn(2+) is bound by residues H571 and H574.

It belongs to the peptidase M3 family. It depends on Zn(2+) as a cofactor.

Its subcellular location is the mitochondrion matrix. It carries out the reaction Release of an N-terminal octapeptide as second stage of processing of some proteins imported into the mitochondrion.. In terms of biological role, cleaves proteins, imported into the mitochondrion, to their mature size. While most mitochondrial precursor proteins are processed to the mature form in one step by mitochondrial processing peptidase (MPP), the sequential cleavage by MIP of an octapeptide after initial processing by MPP is a required step for a subgroup of nuclear-encoded precursor proteins destined for the matrix or the inner membrane. The sequence is that of Mitochondrial intermediate peptidase (OCT1) from Eremothecium gossypii (strain ATCC 10895 / CBS 109.51 / FGSC 9923 / NRRL Y-1056) (Yeast).